The following is a 529-amino-acid chain: MGADLKQPQDADSPPKGVSRRRFLTTGAAAVVGTGVGAGGTALLSSHPRGPAVWYQRGRSGAPPVGGLHLQFGRNASTEMVVSWHTTDTVGNPRVMLGTPTSGFGSVVVAETRSYRDAKSNTEVRVNHAHLTNLTPDTDYVYAAVHDGTTPELGTARTAPSGRKPLRFTSFGDQSTPALGRLADGRYVSDNIGSPFAGDITIAIERIAPLFNLINGDLCYANLAQDRIRTWSDWFDNNTRSARYRPWMPAAGNHENEVGNGPIGYDAYQTYFAVPDSGSSPQLRGLWYSFTAGSVRVISLHNDDVCYQDGGNSYVRGYSGGEQRRWLQAELANARRDSEIDWVVVCMHQTAISTADDNNGADLGIRQEWLPLFDQYQVDLVVCGHEHHYERSHPLRGALGTDTRTPIPVDTRSDLIDSTRGTVHLVIGGGGTSKPTNALLFPQPRCQVITGVGDFDPAIRRKPSIFVLEDAPWSAFRDRDNPYGFVAFDVDPGQPGGTTSIKATYYAVTGPFGGLTVIDQFTLTKPRGG.

The segment at 1–20 (MGADLKQPQDADSPPKGVSR) is disordered. Residues 1 to 52 (MGADLKQPQDADSPPKGVSRRRFLTTGAAAVVGTGVGAGGTALLSSHPRGPA) constitute a signal peptide (tat-type signal).

In terms of processing, predicted to be exported by the Tat system. The position of the signal peptide cleavage has not been experimentally proven.

This is an uncharacterized protein from Mycobacterium tuberculosis (strain CDC 1551 / Oshkosh).